The sequence spans 700 residues: Elongation factor G (700 aa).

The tr-type G domain occupies 10-286; that stretch reads TKVRNIGIMA…AVIDYLPNPL (277 aa). Residues 19-26, 83-87, and 137-140 each bind GTP; these read AHIDAGKT, DTPGH, and NKMD.

The protein belongs to the TRAFAC class translation factor GTPase superfamily. Classic translation factor GTPase family. EF-G/EF-2 subfamily.

The protein resides in the cytoplasm. In terms of biological role, catalyzes the GTP-dependent ribosomal translocation step during translation elongation. During this step, the ribosome changes from the pre-translocational (PRE) to the post-translocational (POST) state as the newly formed A-site-bound peptidyl-tRNA and P-site-bound deacylated tRNA move to the P and E sites, respectively. Catalyzes the coordinated movement of the two tRNA molecules, the mRNA and conformational changes in the ribosome. The protein is Elongation factor G of Mycolicibacterium vanbaalenii (strain DSM 7251 / JCM 13017 / BCRC 16820 / KCTC 9966 / NRRL B-24157 / PYR-1) (Mycobacterium vanbaalenii).